Here is a 504-residue protein sequence, read N- to C-terminus: Probable ergothioneine transporter EgtUBC (504 aa).

Residues 19-198 form the ABC transmembrane type-1 domain; it reads MIEHIQISFI…LLAIIFDLIL (180 aa). The next 6 membrane-spanning stretches (helical) occupy residues 25–45, 49–69, 70–90, 145–165, 178–198, and 209–229; these read ISFIALLIATAIAVPLGILLT, TISEIVMNIAAILQTIPSLAL, LGLMIPLFGIGRVPAIIALVV, AMVLIIGTATLAALIGAGGLG, SLILLGAIPAALLAIIFDLIL, and LLMTLGVIVMIIILAIAIPMF. The ergothioneine binding domain stretch occupies residues 231 to 504; that stretch reads QKGDKITLAG…DYLKAKGLIK (274 aa).

It in the N-terminal section; belongs to the binding-protein-dependent transport system permease family. The protein in the C-terminal section; belongs to the OsmX family. As to quaternary structure, the complex is probably composed of at least an ATP-binding protein (EgtUA) and a transmembrane protein (EgtUBC).

It is found in the membrane. Its function is as follows. Part of an ABC transporter complex EgtU required for the uptake of ergothioneine (EGT), a natural low-molecular weight (LMW) thiol antioxidant. Responsible for the translocation of the substrate across the membrane. Also contains a C-terminal periplasmic solute-binding domain (SBD) which binds to EGT with sub-micromolar affinity. Probably does not bind L-hercynine. In Staphylococcus aureus (strain USA300), this protein is Probable ergothioneine transporter EgtUBC (egtUBC).